The primary structure comprises 87 residues: Large ribosomal subunit protein eL31 (87 aa).

It belongs to the eukaryotic ribosomal protein eL31 family.

In Methanocorpusculum labreanum (strain ATCC 43576 / DSM 4855 / Z), this protein is Large ribosomal subunit protein eL31.